A 192-amino-acid polypeptide reads, in one-letter code: Fe/S biogenesis protein NfuA (192 aa).

[4Fe-4S] cluster-binding residues include cysteine 149 and cysteine 152.

The protein belongs to the NfuA family. In terms of assembly, homodimer. It depends on [4Fe-4S] cluster as a cofactor.

In terms of biological role, involved in iron-sulfur cluster biogenesis. Binds a 4Fe-4S cluster, can transfer this cluster to apoproteins, and thereby intervenes in the maturation of Fe/S proteins. Could also act as a scaffold/chaperone for damaged Fe/S proteins. The sequence is that of Fe/S biogenesis protein NfuA from Shewanella amazonensis (strain ATCC BAA-1098 / SB2B).